The primary structure comprises 242 residues: ATP synthase subunit a (242 aa).

7 consecutive transmembrane segments (helical) span residues 23–43 (ISFT…AVLL), 62–82 (VELI…VGGL), 84–104 (YIPF…IGIL), 113–133 (HVSV…VLGF), 143–163 (IFLP…IKLF), 176–196 (LAAN…FVLK), and 201–221 (LAPL…FVAI).

It belongs to the ATPase A chain family. As to quaternary structure, F-type ATPases have 2 components, CF(1) - the catalytic core - and CF(0) - the membrane proton channel. CF(1) has five subunits: alpha(3), beta(3), gamma(1), delta(1), epsilon(1). CF(0) has three main subunits: a(1), b(2) and c(9-12). The alpha and beta chains form an alternating ring which encloses part of the gamma chain. CF(1) is attached to CF(0) by a central stalk formed by the gamma and epsilon chains, while a peripheral stalk is formed by the delta and b chains.

It localises to the cell inner membrane. Its function is as follows. Key component of the proton channel; it plays a direct role in the translocation of protons across the membrane. This chain is ATP synthase subunit a, found in Anaplasma phagocytophilum (strain HZ).